Reading from the N-terminus, the 261-residue chain is Single-strand annealing weakened protein 1 (261 aa).

In terms of assembly, interacts with MSH2, MSH3, RAD1, RAD10, RAD51 and RAD52.

The protein resides in the nucleus. In terms of biological role, catalyzes 3'-non-homologous tail removal of RAD1/RAD10-dependent single-strand annealing recombination intermediates. Plays a key role in targeting RAD1/RAD10 complex to 3'-flap cleavage substrate in recombination. Also contributes to the integrity of ribosomal DNA arrays. The sequence is that of Single-strand annealing weakened protein 1 (SAW1) from Saccharomyces cerevisiae (strain ATCC 204508 / S288c) (Baker's yeast).